We begin with the raw amino-acid sequence, 445 residues long: Argininosuccinate synthase (445 aa).

ATP is bound by residues 17 to 25 (AFSGGLDTS) and Ala43. Tyr99 provides a ligand contact to L-citrulline. ATP is bound by residues Gly129 and Thr131. Positions 131, 135, and 136 each coordinate L-aspartate. Asn135 is an L-citrulline binding site. An ATP-binding site is contributed by Asp136. Residues Arg139 and Ser192 each contribute to the L-citrulline site. Asp194 is a binding site for ATP. Positions 201, 203, and 280 each coordinate L-citrulline.

This sequence belongs to the argininosuccinate synthase family. Type 2 subfamily. Homotetramer.

The protein resides in the cytoplasm. It catalyses the reaction L-citrulline + L-aspartate + ATP = 2-(N(omega)-L-arginino)succinate + AMP + diphosphate + H(+). Its pathway is amino-acid biosynthesis; L-arginine biosynthesis; L-arginine from L-ornithine and carbamoyl phosphate: step 2/3. The polypeptide is Argininosuccinate synthase (Bordetella petrii (strain ATCC BAA-461 / DSM 12804 / CCUG 43448)).